The primary structure comprises 76 residues: Exodeoxyribonuclease 7 small subunit (76 aa).

This sequence belongs to the XseB family. In terms of assembly, heterooligomer composed of large and small subunits.

The protein localises to the cytoplasm. The enzyme catalyses Exonucleolytic cleavage in either 5'- to 3'- or 3'- to 5'-direction to yield nucleoside 5'-phosphates.. Functionally, bidirectionally degrades single-stranded DNA into large acid-insoluble oligonucleotides, which are then degraded further into small acid-soluble oligonucleotides. This chain is Exodeoxyribonuclease 7 small subunit, found in Methylococcus capsulatus (strain ATCC 33009 / NCIMB 11132 / Bath).